The chain runs to 574 residues: Acyloxyacyl hydrolase (574 aa).

A signal peptide spans 1 to 22 (MKFPWKVFKTTLLLLLLSHSLA). A propeptide spanning residues 23 to 33 (SVPSEDQPGDS) is cleaved from the precursor. A Saposin B-type domain is found at 36-117 (HGQSCLGCVV…YALEFCKRGA (82 aa)). The important for enzyme activity, localization to cytoplasmic vesicles, and protein stability stretch occupies residues 37–69 (GQSCLGCVVLVSVIEQLAEVHNSSVQVAMERLC). Intrachain disulfides connect Cys40-Cys113, Cys43-Cys107, Cys69-Cys82, Cys122-Cys452, Cys159-Cys168, Cys205-Cys229, Cys248-Cys328, and Cys375-Cys458. Asn58 carries N-linked (GlcNAc...) asparagine glycosylation. Positions 172-176 (ELSIK) are lipopolysaccharide binding. 15 residues coordinate Ca(2+): Asp183, Asp185, Asp187, His189, Asp204, Asn206, Asp207, Asp209, Val212, Asp222, Asp226, Asn228, Asn230, Ile232, and Glu244. The N-linked (GlcNAc...) asparagine glycan is linked to Asn206. The active site involves Ser262. Residues Asn408 and Asn465 are each glycosylated (N-linked (GlcNAc...) asparagine).

Heterodimer of the large and small subunits; disulfide-linked. Requires Ca(2+) as cofactor. Cleaved into a large and a small subunit. Post-translationally, the small subunit is N-glycosylated. Detected in peritoneal macrophages (at protein level). Strongly expressed in kidney cortex, where it may be produced by proximal tubule cells. In liver, expressed at high levels in Kupffer cells. Expressed by dendritic cells. Detected at low levels in alveolar macrophages.

Its subcellular location is the secreted. The protein resides in the cytoplasmic vesicle. It catalyses the reaction a 3-(acyloxy)acyl derivative of bacterial toxin + H2O = a 3-hydroxyacyl derivative of bacterial toxin + a fatty acid + H(+). Its function is as follows. Removes the secondary (acyloxyacyl-linked) fatty acyl chains from the lipid A region of bacterial lipopolysaccharides (LPS). By breaking down LPS, terminates the host response to bacterial infection and prevents prolonged and damaging inflammatory responses. In peritoneal macrophages, seems to be important for recovery from a state of immune tolerance following infection by Gram-negative bacteria. In Mus musculus (Mouse), this protein is Acyloxyacyl hydrolase.